Reading from the N-terminus, the 101-residue chain is NAD(P)H-quinone oxidoreductase subunit 4L, chloroplastic (101 aa).

Transmembrane regions (helical) follow at residues 2–22 (MLEH…YGLI), 27–46 (MVRA…MNLI), and 61–81 (IFSI…PAIV).

It belongs to the complex I subunit 4L family. NDH is composed of at least 16 different subunits, 5 of which are encoded in the nucleus.

The protein resides in the plastid. It localises to the chloroplast thylakoid membrane. It catalyses the reaction a plastoquinone + NADH + (n+1) H(+)(in) = a plastoquinol + NAD(+) + n H(+)(out). The enzyme catalyses a plastoquinone + NADPH + (n+1) H(+)(in) = a plastoquinol + NADP(+) + n H(+)(out). Its function is as follows. NDH shuttles electrons from NAD(P)H:plastoquinone, via FMN and iron-sulfur (Fe-S) centers, to quinones in the photosynthetic chain and possibly in a chloroplast respiratory chain. The immediate electron acceptor for the enzyme in this species is believed to be plastoquinone. Couples the redox reaction to proton translocation, and thus conserves the redox energy in a proton gradient. The protein is NAD(P)H-quinone oxidoreductase subunit 4L, chloroplastic of Drimys granadensis.